We begin with the raw amino-acid sequence, 728 residues long: Phosphoribosylformylglycinamidine synthase subunit PurL (728 aa).

His42 is an active-site residue. Residues Tyr45 and Lys84 each contribute to the ATP site. Glu86 provides a ligand contact to Mg(2+). Residues 87-90 (SHNH) and Arg109 contribute to the substrate site. Catalysis depends on His88, which acts as the Proton acceptor. Mg(2+) is bound at residue Asp110. Gln237 contacts substrate. Residue Asp265 participates in Mg(2+) binding. 309-311 (ESQ) is a substrate binding site. Positions 491 and 528 each coordinate ATP. Asn529 provides a ligand contact to Mg(2+). Ser531 serves as a coordination point for substrate.

The protein belongs to the FGAMS family. In terms of assembly, monomer. Part of the FGAM synthase complex composed of 1 PurL, 1 PurQ and 2 PurS subunits.

The protein localises to the cytoplasm. The enzyme catalyses N(2)-formyl-N(1)-(5-phospho-beta-D-ribosyl)glycinamide + L-glutamine + ATP + H2O = 2-formamido-N(1)-(5-O-phospho-beta-D-ribosyl)acetamidine + L-glutamate + ADP + phosphate + H(+). It participates in purine metabolism; IMP biosynthesis via de novo pathway; 5-amino-1-(5-phospho-D-ribosyl)imidazole from N(2)-formyl-N(1)-(5-phospho-D-ribosyl)glycinamide: step 1/2. Part of the phosphoribosylformylglycinamidine synthase complex involved in the purines biosynthetic pathway. Catalyzes the ATP-dependent conversion of formylglycinamide ribonucleotide (FGAR) and glutamine to yield formylglycinamidine ribonucleotide (FGAM) and glutamate. The FGAM synthase complex is composed of three subunits. PurQ produces an ammonia molecule by converting glutamine to glutamate. PurL transfers the ammonia molecule to FGAR to form FGAM in an ATP-dependent manner. PurS interacts with PurQ and PurL and is thought to assist in the transfer of the ammonia molecule from PurQ to PurL. The sequence is that of Phosphoribosylformylglycinamidine synthase subunit PurL from Campylobacter jejuni (strain RM1221).